The chain runs to 431 residues: Serine--tRNA ligase (431 aa).

The disordered stretch occupies residues Gln41–Glu66. Thr240 to Glu242 contacts L-serine. Arg271 to Glu273 is an ATP binding site. L-serine is bound at residue Glu294. Glu358–Ser361 lines the ATP pocket. Ser392 is an L-serine binding site.

Belongs to the class-II aminoacyl-tRNA synthetase family. Type-1 seryl-tRNA synthetase subfamily. As to quaternary structure, homodimer. The tRNA molecule binds across the dimer.

It is found in the cytoplasm. It catalyses the reaction tRNA(Ser) + L-serine + ATP = L-seryl-tRNA(Ser) + AMP + diphosphate + H(+). The enzyme catalyses tRNA(Sec) + L-serine + ATP = L-seryl-tRNA(Sec) + AMP + diphosphate + H(+). The protein operates within aminoacyl-tRNA biosynthesis; selenocysteinyl-tRNA(Sec) biosynthesis; L-seryl-tRNA(Sec) from L-serine and tRNA(Sec): step 1/1. Its function is as follows. Catalyzes the attachment of serine to tRNA(Ser). Is also able to aminoacylate tRNA(Sec) with serine, to form the misacylated tRNA L-seryl-tRNA(Sec), which will be further converted into selenocysteinyl-tRNA(Sec). The chain is Serine--tRNA ligase from Aeromonas salmonicida (strain A449).